A 597-amino-acid chain; its full sequence is Leukocyte immunoglobulin-like receptor subfamily B member 2 (597 aa).

The first 21 residues, 1 to 21 (MTPIVTVLICLGLSLGPRTRV), serve as a signal peptide directing secretion. Over 22–460 (QTGTIPKPTL…QSGLGRHLGV (439 aa)) the chain is Extracellular. Ig-like C2-type domains follow at residues 27–110 (PKPT…SELS), 111–229 (DPLV…SLSV), 230–318 (QPGP…ILIT), and 330–419 (QPGP…LVVS). 4 disulfide bridges follow: C49–C98, C144–C196, C156–C166, and C245–C296. Residues N280, N301, and N340 are each glycosylated (N-linked (GlcNAc...) asparagine). Cysteines 345 and 396 form a disulfide. Positions 417 to 451 (VVSGPSMGSSPPPTGPISTPGPEDQPLTPTGSDPQ) are disordered. The helical transmembrane segment at 461–481 (VIGILVAVVLLLLLLLLLFLI) threads the bilayer. At 482-597 (LRHRRQGKHW…PSIYATLAIH (116 aa)) the chain is on the cytoplasmic side. Residues 491–523 (WTSTQRKADFQHPAGAVGPEPTDRGLQWRSSPA) form a disordered region. Short sequence motifs (ITIM motif) lie at residues 530–535 (NLYAAV), 559–564 (VTYAQL), and 589–594 (SIYATL). The interval 537 to 597 (DTQPEDGVEM…PSIYATLAIH (61 aa)) is disordered.

As to quaternary structure, binds PTPN6 when phosphorylated. Binds FCGR1A. Interacts with peptide-bound HLA-G-B2M; this interaction is direct. Interacts with peptide-bound HLA-F-B2M; this interaction is direct. Phosphorylated on tyrosine residues. Dephosphorylated by PTPN6. As to expression, expressed in monocytes and at lower levels in myeloid and plasmacytoid dendritic cells. Expressed in tolerogenic IL10-producing dendritic cells. Expressed in myeloid-derived suppressor cells during pregnancy. Detected at low levels in natural killer (NK) cells. Expressed in B cells.

The protein localises to the cell membrane. In terms of biological role, receptor for class I MHC antigens. Recognizes a broad spectrum of HLA-A, HLA-B, HLA-C, HLA-G and HLA-F alleles. Involved in the down-regulation of the immune response and the development of tolerance. Recognizes HLA-G in complex with B2M/beta-2 microglobulin and a nonamer self-peptide (peptide-bound HLA-G-B2M) triggering differentiation of type 1 regulatory T cells and myeloid-derived suppressor cells, both of which actively maintain maternal-fetal tolerance. Competes with CD8A for binding to class I MHC antigens. Inhibits FCGR1A-mediated phosphorylation of cellular proteins and mobilization of intracellular calcium ions. In Homo sapiens (Human), this protein is Leukocyte immunoglobulin-like receptor subfamily B member 2.